The chain runs to 107 residues: NADH-quinone oxidoreductase subunit K 2 (107 aa).

A run of 3 helical transmembrane segments spans residues 3 to 23, 30 to 50, and 67 to 87; these read LPIY…LWGA, VRIL…LITF, and ILTL…LAII.

It belongs to the complex I subunit 4L family. In terms of assembly, NDH-1 is composed of 14 different subunits. Subunits NuoA, H, J, K, L, M, N constitute the membrane sector of the complex.

Its subcellular location is the cell membrane. The enzyme catalyses a quinone + NADH + 5 H(+)(in) = a quinol + NAD(+) + 4 H(+)(out). Functionally, NDH-1 shuttles electrons from NADH, via FMN and iron-sulfur (Fe-S) centers, to quinones in the respiratory chain. The immediate electron acceptor for the enzyme in this species is believed to be a menaquinone. Couples the redox reaction to proton translocation (for every two electrons transferred, four hydrogen ions are translocated across the cytoplasmic membrane), and thus conserves the redox energy in a proton gradient. The sequence is that of NADH-quinone oxidoreductase subunit K 2 from Symbiobacterium thermophilum (strain DSM 24528 / JCM 14929 / IAM 14863 / T).